The chain runs to 127 residues: Large ribosomal subunit protein uL22c (127 aa).

Belongs to the universal ribosomal protein uL22 family. As to quaternary structure, part of the 50S ribosomal subunit.

It localises to the plastid. The protein localises to the chloroplast. Its function is as follows. This protein binds specifically to 23S rRNA. In terms of biological role, the globular domain of the protein is located near the polypeptide exit tunnel on the outside of the subunit, while an extended beta-hairpin is found that lines the wall of the exit tunnel in the center of the 70S ribosome. The sequence is that of Large ribosomal subunit protein uL22c (rpl22) from Acorus calamus var. americanus (American sweet flag).